The sequence spans 208 residues: Ribosomal RNA small subunit methyltransferase G (208 aa).

S-adenosyl-L-methionine-binding positions include Gly76, Leu81, 127–128 (VE), and Arg142.

Belongs to the methyltransferase superfamily. RNA methyltransferase RsmG family.

It is found in the cytoplasm. It catalyses the reaction guanosine(527) in 16S rRNA + S-adenosyl-L-methionine = N(7)-methylguanosine(527) in 16S rRNA + S-adenosyl-L-homocysteine. Specifically methylates the N7 position of guanine in position 527 of 16S rRNA. The sequence is that of Ribosomal RNA small subunit methyltransferase G from Legionella pneumophila (strain Corby).